We begin with the raw amino-acid sequence, 68 residues long: Dermaseptin-H5 (68 aa).

The first 17 residues, 1-17, serve as a signal peptide directing secretion; the sequence is KSLFLVLFLGMVSLSIC. Positions 18–38 are excised as a propeptide; sequence EEEKRENEDEEKQEDDEQSEM. A disordered region spans residues 19–40; it reads EEKRENEDEEKQEDDEQSEMKR. The span at 25–35 shows a compositional bias: acidic residues; the sequence is EDEEKQEDDEQ. At leucine 65 the chain carries Leucine amide. Positions 67–68 are excised as a propeptide; the sequence is EQ.

Expressed by the skin glands.

The protein localises to the secreted. Its function is as follows. Has antibacterial activity against the Gram-negative bacteria E.coli ATCC 11775 (MIC=0.5 uM), and the Gram-positive bacteria S.aureus ATCC 12600 (MIC=0.5 uM) and M.luteus ATCC 49732 (MIC=2.0 uM). Does not inhibit the growth of the fungus C.albicans. Probably acts by disturbing membrane functions with its amphipathic structure. The chain is Dermaseptin-H5 from Pithecopus azureus (Orange-legged monkey tree frog).